A 383-amino-acid chain; its full sequence is MTESPKRIVVGLSGGVDSAVAALRLVRAGHEVIGLFMKNWEDDDTLTQCSAEDDIAAAVAVAEHLGIPIRRVNFAAHYRREVFEHALQELRAGRTPNPDILCNRHVKFDRFLRHAREQFEADAVATGHYARTGRAGDGEPALLRGIDPSKDQSYFLAGVPRQALDAVRFPLGDSTKETVRAEARSAALPNFDRPDSTGICFIGERDFTQFMQRYIDPHPGPILTEDGREIGRHCGLAFYTLGQRRGLGIGGDRNRDSSAPWYVAGKDARRNALFVVQGHDHPWLQSAAVSTEPFHWLAPVPAEGARLHAQVRYRQEPQAGQLSHAEGGRVVFRFDEPQRAATPGQHLVLYDREQCLGGGVIDTAHPADRSAPPALQTQSTEVV.

Residues 11-18 (GLSGGVDS) and M37 contribute to the ATP site. Positions 97–99 (NPD) are interaction with target base in tRNA. C102 functions as the Nucleophile in the catalytic mechanism. Cysteines 102 and 200 form a disulfide. Position 127 (G127) interacts with ATP. The segment at 150–152 (KDQ) is interaction with tRNA. The active-site Cysteine persulfide intermediate is the C200. The interaction with tRNA stretch occupies residues 312 to 313 (RY). Residues 361-383 (IDTAHPADRSAPPALQTQSTEVV) form a disordered region.

This sequence belongs to the MnmA/TRMU family.

The protein localises to the cytoplasm. It carries out the reaction S-sulfanyl-L-cysteinyl-[protein] + uridine(34) in tRNA + AH2 + ATP = 2-thiouridine(34) in tRNA + L-cysteinyl-[protein] + A + AMP + diphosphate + H(+). In terms of biological role, catalyzes the 2-thiolation of uridine at the wobble position (U34) of tRNA, leading to the formation of s(2)U34. This is tRNA-specific 2-thiouridylase MnmA from Halorhodospira halophila (strain DSM 244 / SL1) (Ectothiorhodospira halophila (strain DSM 244 / SL1)).